We begin with the raw amino-acid sequence, 226 residues long: Leucyl/phenylalanyl-tRNA--protein transferase (226 aa).

This sequence belongs to the L/F-transferase family.

It is found in the cytoplasm. The catalysed reaction is N-terminal L-lysyl-[protein] + L-leucyl-tRNA(Leu) = N-terminal L-leucyl-L-lysyl-[protein] + tRNA(Leu) + H(+). The enzyme catalyses N-terminal L-arginyl-[protein] + L-leucyl-tRNA(Leu) = N-terminal L-leucyl-L-arginyl-[protein] + tRNA(Leu) + H(+). It carries out the reaction L-phenylalanyl-tRNA(Phe) + an N-terminal L-alpha-aminoacyl-[protein] = an N-terminal L-phenylalanyl-L-alpha-aminoacyl-[protein] + tRNA(Phe). Functionally, functions in the N-end rule pathway of protein degradation where it conjugates Leu, Phe and, less efficiently, Met from aminoacyl-tRNAs to the N-termini of proteins containing an N-terminal arginine or lysine. This Pseudomonas entomophila (strain L48) protein is Leucyl/phenylalanyl-tRNA--protein transferase.